We begin with the raw amino-acid sequence, 442 residues long: Trigger factor (442 aa).

The region spanning G162–T247 is the PPIase FKBP-type domain.

It belongs to the FKBP-type PPIase family. Tig subfamily.

It is found in the cytoplasm. The enzyme catalyses [protein]-peptidylproline (omega=180) = [protein]-peptidylproline (omega=0). Involved in protein export. Acts as a chaperone by maintaining the newly synthesized protein in an open conformation. Functions as a peptidyl-prolyl cis-trans isomerase. This chain is Trigger factor, found in Rickettsia canadensis (strain McKiel).